A 357-amino-acid chain; its full sequence is Thiamine thiazole synthase 1, chloroplastic (357 aa).

The transit peptide at 1-51 directs the protein to the chloroplast; that stretch reads MSISAAGVATGLGANVELKSNVGSSSSSVAGVRLFTSRKAQLRRCAAPATS. Substrate-binding positions include Ala103, 123 to 124, Gly131, and Ala196; that span reads EQ. Cys225 is modified (2,3-didehydroalanine (Cys)). Substrate-binding positions include Asp227, His242, Met294, and 304 to 306; that span reads RMG.

It belongs to the THI4 family. Homooctamer. Fe cation is required as a cofactor. During the catalytic reaction, a sulfide is transferred from Cys-225 to a reaction intermediate, generating a dehydroalanine residue.

The protein localises to the plastid. The protein resides in the chloroplast. The enzyme catalyses [ADP-thiazole synthase]-L-cysteine + glycine + NAD(+) = [ADP-thiazole synthase]-dehydroalanine + ADP-5-ethyl-4-methylthiazole-2-carboxylate + nicotinamide + 3 H2O + 2 H(+). Involved in biosynthesis of the thiamine precursor thiazole. Catalyzes the conversion of NAD and glycine to adenosine diphosphate 5-(2-hydroxyethyl)-4-methylthiazole-2-carboxylic acid (ADT), an adenylated thiazole intermediate. The reaction includes an iron-dependent sulfide transfer from a conserved cysteine residue of the protein to a thiazole intermediate. The enzyme can only undergo a single turnover, which suggests it is a suicide enzyme. May have additional roles in adaptation to various stress conditions and in DNA damage tolerance. The sequence is that of Thiamine thiazole synthase 1, chloroplastic from Physcomitrium patens (Spreading-leaved earth moss).